Consider the following 264-residue polypeptide: 3-methyl-2-oxobutanoate hydroxymethyltransferase (264 aa).

Positions 45 and 84 each coordinate Mg(2+). 3-methyl-2-oxobutanoate contacts are provided by residues Asp-45–Ser-46, Asp-84, and Lys-113. Glu-115 serves as a coordination point for Mg(2+). The active-site Proton acceptor is Glu-182.

Belongs to the PanB family. Homodecamer; pentamer of dimers. Requires Mg(2+) as cofactor.

The protein localises to the cytoplasm. The enzyme catalyses 3-methyl-2-oxobutanoate + (6R)-5,10-methylene-5,6,7,8-tetrahydrofolate + H2O = 2-dehydropantoate + (6S)-5,6,7,8-tetrahydrofolate. Its pathway is cofactor biosynthesis; (R)-pantothenate biosynthesis; (R)-pantoate from 3-methyl-2-oxobutanoate: step 1/2. In terms of biological role, catalyzes the reversible reaction in which hydroxymethyl group from 5,10-methylenetetrahydrofolate is transferred onto alpha-ketoisovalerate to form ketopantoate. This is 3-methyl-2-oxobutanoate hydroxymethyltransferase from Caldicellulosiruptor saccharolyticus (strain ATCC 43494 / DSM 8903 / Tp8T 6331).